A 346-amino-acid polypeptide reads, in one-letter code: NADH-cytochrome b5 reductase 2 (346 aa).

The chain crosses the membrane as a helical span at residues 28-50; that stretch reads GGSNAALYAGLAAAAGAGAYYFL. The FAD-binding FR-type domain maps to 95-200; sequence QGFISLKLDS…KGPIPKYPWS (106 aa). An FAD-binding site is contributed by 203 to 238; that stretch reads KHDHIALIAGGTGITPMYQLARAIFNNPADKTKVTL.

The protein belongs to the flavoprotein pyridine nucleotide cytochrome reductase family. The cofactor is FAD.

The protein localises to the mitochondrion outer membrane. It carries out the reaction 2 Fe(III)-[cytochrome b5] + NADH = 2 Fe(II)-[cytochrome b5] + NAD(+) + H(+). In terms of biological role, may mediate the reduction of outer membrane cytochrome b5. The polypeptide is NADH-cytochrome b5 reductase 2 (mcr1) (Botryotinia fuckeliana (strain B05.10) (Noble rot fungus)).